The sequence spans 466 residues: Asparagine--tRNA ligase (466 aa).

Belongs to the class-II aminoacyl-tRNA synthetase family. Homodimer.

The protein localises to the cytoplasm. The enzyme catalyses tRNA(Asn) + L-asparagine + ATP = L-asparaginyl-tRNA(Asn) + AMP + diphosphate + H(+). The chain is Asparagine--tRNA ligase from Vibrio parahaemolyticus serotype O3:K6 (strain RIMD 2210633).